The primary structure comprises 330 residues: DNA-binding death effector domain-containing protein 2 (330 aa).

The DED domain occupies 25-104; the sequence is SLHRMFEVVG…RHDLLPHLAR (80 aa). The Nuclear localization signal signature appears at 104–109; sequence RKRRRP. A disordered region spans residues 104 to 195; it reads RKRRRPVSPE…HQELGRPSSE (92 aa). The segment covering 137 to 147 has biased composition (low complexity); sequence ASSSSDSPQSQ. The short motif at 156 to 174 is the Bipartite nuclear localization signal element; sequence KRQRRSRGRPSSGARQRRR.

As to quaternary structure, interacts with CASP8, CASP10 and GTF3C3. Homodimerizes and heterodimerizes with DEDD. In terms of tissue distribution, expression is high in liver, heart, kidney, and testis but low in brain, spleen, lung, and skeleton muscle.

The protein localises to the nucleus. The protein resides in the nucleolus. Its function is as follows. May play a critical role in death receptor-induced apoptosis and may target CASP8 and CASP10 to the nucleus. May regulate degradation of intermediate filaments during apoptosis. May play a role in the general transcription machinery in the nucleus and might be an important regulator of the activity of GTF3C3. This Mus musculus (Mouse) protein is DNA-binding death effector domain-containing protein 2 (Dedd2).